The chain runs to 213 residues: Large ribosomal subunit protein uL3 (213 aa).

Q151 carries the N5-methylglutamine modification.

It belongs to the universal ribosomal protein uL3 family. In terms of assembly, part of the 50S ribosomal subunit. Forms a cluster with proteins L14 and L19. Methylated by PrmB.

In terms of biological role, one of the primary rRNA binding proteins, it binds directly near the 3'-end of the 23S rRNA, where it nucleates assembly of the 50S subunit. This is Large ribosomal subunit protein uL3 from Rhizobium johnstonii (strain DSM 114642 / LMG 32736 / 3841) (Rhizobium leguminosarum bv. viciae).